Here is a 367-residue protein sequence, read N- to C-terminus: Phospho-N-acetylmuramoyl-pentapeptide-transferase (367 aa).

The next 10 helical transmembrane spans lie at 13–33 (ISGI…ALTL), 49–69 (LPLL…VPLL), 95–115 (MGGI…SNFA), 119–139 (LAVS…DWQI), 154–174 (LALQ…NQPA), 183–203 (WVSF…FVLV), 215–235 (IDGL…AIVA), 237–257 (TSPA…GFLA), 281–301 (AVAL…IFFV), and 347–367 (VSSF…IAPF).

The protein belongs to the glycosyltransferase 4 family. MraY subfamily. Mg(2+) serves as cofactor.

Its subcellular location is the cell inner membrane. The enzyme catalyses UDP-N-acetyl-alpha-D-muramoyl-L-alanyl-gamma-D-glutamyl-meso-2,6-diaminopimeloyl-D-alanyl-D-alanine + di-trans,octa-cis-undecaprenyl phosphate = di-trans,octa-cis-undecaprenyl diphospho-N-acetyl-alpha-D-muramoyl-L-alanyl-D-glutamyl-meso-2,6-diaminopimeloyl-D-alanyl-D-alanine + UMP. Its pathway is cell wall biogenesis; peptidoglycan biosynthesis. In terms of biological role, catalyzes the initial step of the lipid cycle reactions in the biosynthesis of the cell wall peptidoglycan: transfers peptidoglycan precursor phospho-MurNAc-pentapeptide from UDP-MurNAc-pentapeptide onto the lipid carrier undecaprenyl phosphate, yielding undecaprenyl-pyrophosphoryl-MurNAc-pentapeptide, known as lipid I. This Trichormus variabilis (strain ATCC 29413 / PCC 7937) (Anabaena variabilis) protein is Phospho-N-acetylmuramoyl-pentapeptide-transferase.